A 303-amino-acid chain; its full sequence is 4-diphosphocytidyl-2-C-methyl-D-erythritol kinase (303 aa).

Lysine 18 is an active-site residue. Proline 111–alanine 121 contributes to the ATP binding site. Aspartate 153 is a catalytic residue.

This sequence belongs to the GHMP kinase family. IspE subfamily.

The enzyme catalyses 4-CDP-2-C-methyl-D-erythritol + ATP = 4-CDP-2-C-methyl-D-erythritol 2-phosphate + ADP + H(+). It participates in isoprenoid biosynthesis; isopentenyl diphosphate biosynthesis via DXP pathway; isopentenyl diphosphate from 1-deoxy-D-xylulose 5-phosphate: step 3/6. Its function is as follows. Catalyzes the phosphorylation of the position 2 hydroxy group of 4-diphosphocytidyl-2C-methyl-D-erythritol. This is 4-diphosphocytidyl-2-C-methyl-D-erythritol kinase from Sinorhizobium medicae (strain WSM419) (Ensifer medicae).